The chain runs to 330 residues: Malate dehydrogenase (330 aa).

12-18 is a binding site for NAD(+); that stretch reads GAAGQIG. Arginine 93 and arginine 99 together coordinate substrate. NAD(+)-binding positions include asparagine 106, glutamine 113, and 130–132; that span reads VGN. The substrate site is built by asparagine 132 and arginine 166. The active-site Proton acceptor is the histidine 191.

Belongs to the LDH/MDH superfamily. MDH type 2 family.

The catalysed reaction is (S)-malate + NAD(+) = oxaloacetate + NADH + H(+). Its function is as follows. Catalyzes the reversible oxidation of malate to oxaloacetate. This Azoarcus sp. (strain BH72) protein is Malate dehydrogenase.